A 372-amino-acid polypeptide reads, in one-letter code: MSNQHILLMSNLLPVGSNISTWWNFGSMLLTCLILQIMTGFFLAIHYTANINLAFSSVIHITRDVPYGWIMQNLHAIGASLFFICIYIHIARGLYYGLYLNKEVWLSGTTLLIILMATAFFGYVLPWGQMSFWAATVITNLLTAIPYLGTTLTTWLWGGFSINDPTLTRFFALHFILPFTIISLSSIHIILLHNEGSNNPLGTNSDIDKIPFHPYHTYKDMLMIIIMTAILFLILSFSPNLLNDPENFSKANPLVTPQHIKPEWYFLFAYGILRSIPNKLGGTLALVMSVMILTTAPFTHTSHTRSMMFRPLSQIVFWTLIATFITITWTATKPVEPPFISISQTASIFYFSFFIMNPLLGWTENKIMMMND.

4 helical membrane passes run 25–45, 69–90, 105–125, and 170–190; these read FGSMLLTCLILQIMTGFFLAI, WIMQNLHAIGASLFFICIYIHI, WLSGTTLLIILMATAFFGYVL, and FFALHFILPFTIISLSSIHII. Heme b is bound by residues His-75 and His-89. The heme b site is built by His-174 and His-188. His-193 serves as a coordination point for a ubiquinone. 4 helical membrane-spanning segments follow: residues 218–238, 280–300, 312–332, and 339–358; these read YKDMLMIIIMTAILFLILSFS, LGGTLALVMSVMILTTAPFTH, LSQIVFWTLIATFITITWTAT, and FISISQTASIFYFSFFIMNP.

It belongs to the cytochrome b family. The cytochrome bc1 complex contains 3 respiratory subunits (MT-CYB, CYC1 and UQCRFS1), 2 core proteins (UQCRC1 and UQCRC2) and probably 6 low-molecular weight proteins. The cofactor is heme b.

The protein localises to the mitochondrion inner membrane. Its function is as follows. Component of the ubiquinol-cytochrome c reductase complex (complex III or cytochrome b-c1 complex) that is part of the mitochondrial respiratory chain. The b-c1 complex mediates electron transfer from ubiquinol to cytochrome c. Contributes to the generation of a proton gradient across the mitochondrial membrane that is then used for ATP synthesis. This Walterinnesia aegyptia (Desert black snake) protein is Cytochrome b (MT-CYB).